We begin with the raw amino-acid sequence, 493 residues long: Cysteine--tRNA ligase (493 aa).

Cysteine 29 contributes to the Zn(2+) binding site. A 'HIGH' region motif is present at residues 31–41 (ATVQSEPHIGH). Zn(2+) contacts are provided by cysteine 214, histidine 239, and glutamate 243. The short motif at 270–274 (KMSKS) is the 'KMSKS' region element. Lysine 273 provides a ligand contact to ATP.

It belongs to the class-I aminoacyl-tRNA synthetase family. Monomer. Requires Zn(2+) as cofactor.

It localises to the cytoplasm. The catalysed reaction is tRNA(Cys) + L-cysteine + ATP = L-cysteinyl-tRNA(Cys) + AMP + diphosphate. In Renibacterium salmoninarum (strain ATCC 33209 / DSM 20767 / JCM 11484 / NBRC 15589 / NCIMB 2235), this protein is Cysteine--tRNA ligase.